The following is a 281-amino-acid chain: Pantothenate synthetase (281 aa).

Residue 31 to 38 (MGNLHAGH) coordinates ATP. Histidine 38 serves as the catalytic Proton donor. A (R)-pantoate-binding site is contributed by glutamine 62. Glutamine 62 is a beta-alanine binding site. 150 to 153 (GKKD) provides a ligand contact to ATP. Glutamine 156 serves as a coordination point for (R)-pantoate. ATP is bound by residues valine 179 and 187–190 (MSSR).

It belongs to the pantothenate synthetase family. Homodimer.

It localises to the cytoplasm. It carries out the reaction (R)-pantoate + beta-alanine + ATP = (R)-pantothenate + AMP + diphosphate + H(+). The protein operates within cofactor biosynthesis; (R)-pantothenate biosynthesis; (R)-pantothenate from (R)-pantoate and beta-alanine: step 1/1. Catalyzes the condensation of pantoate with beta-alanine in an ATP-dependent reaction via a pantoyl-adenylate intermediate. In Xylella fastidiosa (strain 9a5c), this protein is Pantothenate synthetase.